We begin with the raw amino-acid sequence, 663 residues long: F-box protein DAS1 (663 aa).

An F-box domain is found at 46–91; that stretch reads VFPLTKLPDELMQEVFSHLPQPDRLQLCLVNKRLNKIATKLLYRRI.

In terms of assembly, interacts with SKP1. Component of the probable SCF(DAS1) complex containing CDC53, SKP1, RBX1 and DAS1.

It participates in protein modification; protein ubiquitination. Its function is as follows. Substrate recognition component of a SCF (SKP1-CUL1-F-box protein) E3 ubiquitin-protein ligase complex which mediates the ubiquitination and subsequent proteasomal degradation of target proteins. Probably recognizes and binds to phosphorylated target proteins. The sequence is that of F-box protein DAS1 (DAS1) from Saccharomyces cerevisiae (strain ATCC 204508 / S288c) (Baker's yeast).